We begin with the raw amino-acid sequence, 99 residues long: RNA-binding protein HI_1333 (99 aa).

Residues 2–98 (TTLSTKQKQF…SEEAKIQLPR (97 aa)) form the CRM domain.

This chain is RNA-binding protein HI_1333, found in Haemophilus influenzae (strain ATCC 51907 / DSM 11121 / KW20 / Rd).